Consider the following 496-residue polypeptide: Fatty acyl-CoA reductase 8 (496 aa).

The protein belongs to the fatty acyl-CoA reductase family.

It carries out the reaction a long-chain fatty acyl-CoA + 2 NADPH + 2 H(+) = a long-chain primary fatty alcohol + 2 NADP(+) + CoA. Catalyzes the reduction of fatty acyl-CoA to fatty alcohols. Catalyzes specifically the formation of C16:0 fatty alcohol. This is Fatty acyl-CoA reductase 8 (FAR8) from Arabidopsis thaliana (Mouse-ear cress).